The chain runs to 68 residues: ATP synthase F(0) complex subunit 8 (68 aa).

Residues T8 to F24 traverse the membrane as a helical segment. At K54 the chain carries N6-acetyllysine; alternate. Residue K54 is modified to N6-succinyllysine; alternate. K57 is subject to N6-acetyllysine.

Belongs to the ATPase protein 8 family. Component of the ATP synthase complex composed at least of ATP5F1A/subunit alpha, ATP5F1B/subunit beta, ATP5MC1/subunit c (homooctomer), MT-ATP6/subunit a, MT-ATP8/subunit 8, ATP5ME/subunit e, ATP5MF/subunit f, ATP5MG/subunit g, ATP5MK/subunit k, ATP5MJ/subunit j, ATP5F1C/subunit gamma, ATP5F1D/subunit delta, ATP5F1E/subunit epsilon, ATP5PF/subunit F6, ATP5PB/subunit b, ATP5PD/subunit d, ATP5PO/subunit OSCP. ATP synthase complex consists of a soluble F(1) head domain (subunits alpha(3) and beta(3)) - the catalytic core - and a membrane F(0) domain - the membrane proton channel (subunits c, a, 8, e, f, g, k and j). These two domains are linked by a central stalk (subunits gamma, delta, and epsilon) rotating inside the F1 region and a stationary peripheral stalk (subunits F6, b, d, and OSCP). Interacts with PRICKLE3.

It is found in the mitochondrion membrane. In terms of biological role, subunit 8, of the mitochondrial membrane ATP synthase complex (F(1)F(0) ATP synthase or Complex V) that produces ATP from ADP in the presence of a proton gradient across the membrane which is generated by electron transport complexes of the respiratory chain. ATP synthase complex consist of a soluble F(1) head domain - the catalytic core - and a membrane F(1) domain - the membrane proton channel. These two domains are linked by a central stalk rotating inside the F(1) region and a stationary peripheral stalk. During catalysis, ATP synthesis in the catalytic domain of F(1) is coupled via a rotary mechanism of the central stalk subunits to proton translocation. In vivo, can only synthesize ATP although its ATP hydrolase activity can be activated artificially in vitro. Part of the complex F(0) domain. The sequence is that of ATP synthase F(0) complex subunit 8 from Lemur catta (Ring-tailed lemur).